Consider the following 227-residue polypeptide: Sensory transduction protein RegX3 (227 aa).

The Response regulatory domain maps to 3–116 (SVLIVEDEES…ELIARIRAVL (114 aa)). Position 52 is a 4-aspartylphosphate (Asp52). The segment at residues 128–227 (DGVLESGPVR…VRGLGYKLEG (100 aa)) is a DNA-binding region (ompR/PhoB-type).

Phosphorylated by SenX3.

In terms of biological role, member of the two-component regulatory system SenX3/RegX3. Specifically binds to the promoter region of the senX3-regX3 operon. This Mycobacterium bovis (strain ATCC BAA-935 / AF2122/97) protein is Sensory transduction protein RegX3.